Consider the following 273-residue polypeptide: Esterase pigG (273 aa).

Active-site charge relay system residues include Ser122, Asp215, and His243.

This sequence belongs to the LovG family.

It participates in secondary metabolite biosynthesis. Its function is as follows. Esterase; part of the gene cluster that mediates the biosynthesis of azaphilone pigments (MonAzPs), a complex mixture of compounds with a common azaphilone skeleton very widely used as food colorants. Within the pathway, pigG may assist the nrPKS pigA in the biosynthesis of the hexaketide precursor. The first step of the pathway is performed by the nrPKS pigA that forms the hexaketide precursor from successive condensations of five malonyl-CoA units, with a simple acetyl-CoA starter unit. The role of esterase pigG is not clear, but it may play at most a supplementary role in the formation of the benzaldehyde produced by the pigA nrPKS. This very reactive benzaldehyde is intercepted by the pigC ketoreductase that to provide the first stable enzyme-free MonAzPs intermediate, 6-(4-hydroxy-2-oxopentyl)-3-methyl-2,4-dioxocyclohexane carbaldehyde, also known as M7PKS-1. The FAD-dependent monooxygenase pigN hydroxylates M7PKS-1 at C-4, which triggers the formation of the pyran ring. PigJ, pigK and pigD are involved in the acetylation of the pyran ring. PigJ and pigK form the two subunits of a dedicated fungal FAS that produces the side chain fatty acyl moiety of MonAzPs and pigD transfers the fatty acyl chain to the C-4 alcohol. PigM and pigO are involved in the elimination of the omega-1 alcohol. PigM acts as an O-acetyltransferase that synthesizes the putative O-11 acetyl intermediate whereas pigO eliminates acetic acid to yield an intermediate with a C10(11) double bond. The dehydration of the C-11 alcohol followed by the reduction of the C6(7) double bond by the NAD(P)H-dependent oxidoreductase pigE increases the electrophilicity of the C-5 ketone of the resulting acyl benzopyran. This in turn sets up the C-5 ketone for an intramolecular Knoevenagel aldol condensation with the C-20 enol of the side chain. This condensation affords the characteristic linear tricyclic carbon skeletons of the yellow pigments that serve as the common precursors for the classical yellow pigments monascin and ankaflavin, orange pigments rubopunctatin and monascorubrin, and red pigments ribropunctamine and monascorubramine. The FAD-dependent oxidoreductase pigF is especially invoved in the biosynthesis of orange and red pigments via desaturation of C6(7). The chain is Esterase pigG from Monascus ruber (Mold).